We begin with the raw amino-acid sequence, 1079 residues long: Intraflagellar transport protein 80 (1079 aa).

The segment at 495–514 is disordered; it reads GDMIRPSTVQNQPSTQGLPN. Polar residues predominate over residues 501–514; the sequence is STVQNQPSTQGLPN.

The protein localises to the cell projection. The protein resides in the cilium. It localises to the flagellum. Its subcellular location is the cytoplasm. It is found in the cytoskeleton. The protein localises to the flagellum axoneme. The protein resides in the flagellum basal body. Component of the intraflagellar transport complex B (IFT-B) involved in flagellar assembly. The protein is Intraflagellar transport protein 80 of Giardia intestinalis (strain ATCC 50803 / WB clone C6) (Giardia lamblia).